The following is a 96-amino-acid chain: Muconolactone Delta-isomerase 2 (96 aa).

The protein belongs to the muconolactone Delta-isomerase family. In terms of assembly, homodecamer.

The catalysed reaction is (S)-muconolactone = (4,5-dihydro-5-oxofuran-2-yl)-acetate. The protein operates within aromatic compound metabolism; beta-ketoadipate pathway; 5-oxo-4,5-dihydro-2-furylacetate from catechol: step 3/3. In Acinetobacter lwoffii, this protein is Muconolactone Delta-isomerase 2 (catC2).